The chain runs to 277 residues: tRNA uridine(34) hydroxylase (277 aa).

Residues 126–221 (SSPDVHVIDT…YLETVRGDDS (96 aa)) enclose the Rhodanese domain. C181 serves as the catalytic Cysteine persulfide intermediate.

It belongs to the TrhO family.

It catalyses the reaction uridine(34) in tRNA + AH2 + O2 = 5-hydroxyuridine(34) in tRNA + A + H2O. Functionally, catalyzes oxygen-dependent 5-hydroxyuridine (ho5U) modification at position 34 in tRNAs. In Anaplasma marginale (strain Florida), this protein is tRNA uridine(34) hydroxylase.